The sequence spans 154 residues: Cyanate hydratase (154 aa).

Active-site residues include R100, E103, and S126.

Belongs to the cyanase family.

It carries out the reaction cyanate + hydrogencarbonate + 3 H(+) = NH4(+) + 2 CO2. Functionally, catalyzes the reaction of cyanate with bicarbonate to produce ammonia and carbon dioxide. The chain is Cyanate hydratase from Aspergillus terreus (strain NIH 2624 / FGSC A1156).